The primary structure comprises 126 residues: Large ribosomal subunit protein bL17 (126 aa).

Belongs to the bacterial ribosomal protein bL17 family. As to quaternary structure, part of the 50S ribosomal subunit. Contacts protein L32.

The chain is Large ribosomal subunit protein bL17 from Xylella fastidiosa (strain Temecula1 / ATCC 700964).